A 69-amino-acid polypeptide reads, in one-letter code: ATP synthase F(0) complex subunit e, mitochondrial (69 aa).

K34 is subject to N6-acetyllysine. S66 carries the post-translational modification Phosphoserine.

It belongs to the ATPase e subunit family. In terms of assembly, component of the ATP synthase complex composed at least of ATP5F1A/subunit alpha, ATP5F1B/subunit beta, ATP5MC1/subunit c (homooctomer), MT-ATP6/subunit a, MT-ATP8/subunit 8, ATP5ME/subunit e, ATP5MF/subunit f, ATP5MG/subunit g, ATP5MK/subunit k, ATP5MJ/subunit j, ATP5F1C/subunit gamma, ATP5F1D/subunit delta, ATP5F1E/subunit epsilon, ATP5PF/subunit F6, ATP5PB/subunit b, ATP5PD/subunit d, ATP5PO/subunit OSCP. ATP synthase complex consists of a soluble F(1) head domain (subunits alpha(3) and beta(3)) - the catalytic core - and a membrane F(0) domain - the membrane proton channel (subunits c, a, 8, e, f, g, k and j). These two domains are linked by a central stalk (subunits gamma, delta, and epsilon) rotating inside the F1 region and a stationary peripheral stalk (subunits F6, b, d, and OSCP).

Its subcellular location is the mitochondrion. It is found in the mitochondrion inner membrane. In terms of biological role, subunit e, of the mitochondrial membrane ATP synthase complex (F(1)F(0) ATP synthase or Complex V) that produces ATP from ADP in the presence of a proton gradient across the membrane which is generated by electron transport complexes of the respiratory chain. ATP synthase complex consist of a soluble F(1) head domain - the catalytic core - and a membrane F(1) domain - the membrane proton channel. These two domains are linked by a central stalk rotating inside the F(1) region and a stationary peripheral stalk. During catalysis, ATP synthesis in the catalytic domain of F(1) is coupled via a rotary mechanism of the central stalk subunits to proton translocation. In vivo, can only synthesize ATP although its ATP hydrolase activity can be activated artificially in vitro. Part of the complex F(0) domain. The chain is ATP synthase F(0) complex subunit e, mitochondrial from Homo sapiens (Human).